The primary structure comprises 306 residues: Agmatinase (306 aa).

Residues H126, D149, H151, D153, D230, and D232 each coordinate Mn(2+).

It belongs to the arginase family. Agmatinase subfamily. Mn(2+) serves as cofactor.

It catalyses the reaction agmatine + H2O = urea + putrescine. It functions in the pathway amine and polyamine biosynthesis; putrescine biosynthesis via agmatine pathway; putrescine from agmatine: step 1/1. In terms of biological role, catalyzes the formation of putrescine from agmatine. In Salmonella dublin (strain CT_02021853), this protein is Agmatinase.